Here is a 463-residue protein sequence, read N- to C-terminus: L-seryl-tRNA(Sec) selenium transferase (463 aa).

Position 295 is an N6-(pyridoxal phosphate)lysine (lysine 295).

Belongs to the SelA family. Homodecamer; pentamer of dimers. Binds only one seryl-tRNA(Sec) per dimer. Pyridoxal 5'-phosphate is required as a cofactor.

It localises to the cytoplasm. It carries out the reaction L-seryl-tRNA(Sec) + selenophosphate + H(+) = L-selenocysteinyl-tRNA(Sec) + phosphate. It functions in the pathway aminoacyl-tRNA biosynthesis; selenocysteinyl-tRNA(Sec) biosynthesis; selenocysteinyl-tRNA(Sec) from L-seryl-tRNA(Sec) (bacterial route): step 1/1. Functionally, converts seryl-tRNA(Sec) to selenocysteinyl-tRNA(Sec) required for selenoprotein biosynthesis. The protein is L-seryl-tRNA(Sec) selenium transferase of Escherichia coli (strain 55989 / EAEC).